The following is a 20-amino-acid chain: ITCGQVTGSLAPXIPFLRTG.

This sequence belongs to the plant LTP family.

Its function is as follows. Plant non-specific lipid-transfer proteins transfer phospholipids as well as galactolipids across membranes. May play a role in wax or cutin deposition in the cell walls of expanding epidermal cells and certain secretory tissues. The chain is Non-specific lipid-transfer protein from Citrus limon (Lemon).